We begin with the raw amino-acid sequence, 320 residues long: Delta(7)-sterol 5(6)-desaturase erg3C (320 aa).

The next 3 membrane-spanning stretches (helical) occupy residues V43–A63, S91–V111, and P127–I147. In terms of domain architecture, Fatty acid hydroxylase spans I134 to S283. Positions H148–H152 match the Histidine box-1 motif. The short motif at H161–H165 is the Histidine box-2 element. A helical membrane pass occupies residues Y224–I244. A Histidine box-3 motif is present at residues H259–H263.

Belongs to the sterol desaturase family. The cofactor is Fe cation.

It localises to the endoplasmic reticulum membrane. Its function is as follows. Delta(7)-sterol 5(6)-desaturase; part of the third module of ergosterol biosynthesis pathway that includes the late steps of the pathway. Erg3C is a minor delta(7)-sterol 5(6)-desaturase within the ergosterol pathway, erg3B being the major one. The third module or late pathway involves the ergosterol synthesis itself through consecutive reactions that mainly occur in the endoplasmic reticulum (ER) membrane. Firstly, the squalene synthase erg9 catalyzes the condensation of 2 farnesyl pyrophosphate moieties to form squalene, which is the precursor of all steroids. Squalene synthase is crucial for balancing the incorporation of farnesyl diphosphate (FPP) into sterol and nonsterol isoprene synthesis. Secondly, squalene is converted into lanosterol by the consecutive action of the squalene epoxidase erg1 and the lanosterol synthase erg7. Then, the delta(24)-sterol C-methyltransferase erg6 methylates lanosterol at C-24 to produce eburicol. Eburicol is the substrate of the sterol 14-alpha demethylase encoded by cyp51A and cyp51B, to yield 4,4,24-trimethyl ergosta-8,14,24(28)-trienol. The C-14 reductase erg24 then reduces the C14=C15 double bond which leads to 4,4-dimethylfecosterol. A sequence of further demethylations at C-4, involving the C-4 demethylation complex containing the C-4 methylsterol oxidases erg25A or erg25B, the sterol-4-alpha-carboxylate 3-dehydrogenase erg26 and the 3-keto-steroid reductase erg27, leads to the production of fecosterol via 4-methylfecosterol. The C-8 sterol isomerase erg2 then catalyzes the reaction which results in unsaturation at C-7 in the B ring of sterols and thus converts fecosterol to episterol. The sterol-C5-desaturase erg3B then catalyzes the introduction of a C-5 double bond in the B ring to produce 5-dehydroepisterol. The 2 other sterol-C5-desaturases, erg3A and erg3C, seem to be less important in ergosterol biosynthesis. The C-22 sterol desaturase erg5 further converts 5-dehydroepisterol into ergosta-5,7,22,24(28)-tetraen-3beta-ol by forming the C-22(23) double bond in the sterol side chain. Finally, ergosta-5,7,22,24(28)-tetraen-3beta-ol is substrate of the C-24(28) sterol reductases erg4A and erg4B to produce ergosterol. Possible alternative sterol biosynthetic pathways might exist from fecosterol to ergosterol, depending on the activities of the erg3 isoforms. This Aspergillus fumigatus (strain ATCC MYA-4609 / CBS 101355 / FGSC A1100 / Af293) (Neosartorya fumigata) protein is Delta(7)-sterol 5(6)-desaturase erg3C.